We begin with the raw amino-acid sequence, 283 residues long: Putative UTP--glucose-1-phosphate uridylyltransferase (283 aa).

The protein belongs to the UDPGP type 2 family.

It carries out the reaction alpha-D-glucose 1-phosphate + UTP + H(+) = UDP-alpha-D-glucose + diphosphate. The protein is Putative UTP--glucose-1-phosphate uridylyltransferase of Methanocaldococcus jannaschii (strain ATCC 43067 / DSM 2661 / JAL-1 / JCM 10045 / NBRC 100440) (Methanococcus jannaschii).